The chain runs to 500 residues: Small ribosomal subunit protein uS3m (500 aa).

The protein belongs to the universal ribosomal protein uS3 family.

The protein localises to the mitochondrion. The sequence is that of Small ribosomal subunit protein uS3m (RPS3) from Prototheca wickerhamii.